A 367-amino-acid polypeptide reads, in one-letter code: Chorismate synthase (367 aa).

NADP(+)-binding residues include Arg-48 and Arg-54. FMN-binding positions include 125–127 (RSS), 238–239 (NA), Gly-278, 293–297 (KPTSS), and Arg-319.

The protein belongs to the chorismate synthase family. Homotetramer. FMNH2 serves as cofactor.

It carries out the reaction 5-O-(1-carboxyvinyl)-3-phosphoshikimate = chorismate + phosphate. It functions in the pathway metabolic intermediate biosynthesis; chorismate biosynthesis; chorismate from D-erythrose 4-phosphate and phosphoenolpyruvate: step 7/7. Functionally, catalyzes the anti-1,4-elimination of the C-3 phosphate and the C-6 proR hydrogen from 5-enolpyruvylshikimate-3-phosphate (EPSP) to yield chorismate, which is the branch point compound that serves as the starting substrate for the three terminal pathways of aromatic amino acid biosynthesis. This reaction introduces a second double bond into the aromatic ring system. In Xanthomonas campestris pv. campestris (strain 8004), this protein is Chorismate synthase.